We begin with the raw amino-acid sequence, 375 residues long: MSEQQTCVIDNGSGVVKAGFSGEDAPRAVYPSIVGRPKNVSALIGVDSASEYLGDEAQQKRGVLKIFYPIEHGIVKDWDDMEKIWNHTFYVELRVSPDEHPVLLTEAPLNPKVNREKMTQIMFETFNVPALYVAIQAVLSLYSAGRTTGIVCDAGDGVTHTVPIYEGFSIPHAVSRIQLAGRDLTTFMAKLLTERGYSFTSSAELEIVRDIKEKLCFVALDYEAALKQSHDSSTFEKNYELPDGKIITIGSERFRCPEYLFKPLEMNGKELDSIQDLTYKSIQECDVDVRRDLYQTIILSGGSTSIEGIGERLLKEIENRAPKSINVKVIASPDRRFAVWRGGSTLTSLSTFASMWITKEDYDENGASIVHRKCI.

The protein belongs to the actin family.

Its subcellular location is the cytoplasm. The protein localises to the cytoskeleton. It carries out the reaction ATP + H2O = ADP + phosphate + H(+). Its function is as follows. Actins are highly conserved proteins that are involved in various types of cell motility and are ubiquitously expressed in all eukaryotic cells. The sequence is that of Actin from Sterkiella cavicola (Ciliate).